Consider the following 710-residue polypeptide: Ferrioxamine receptor (710 aa).

Positions 1–26 (MFSAFIIKRSAILCSLAMFIPLASIA) are cleaved as a signal peptide. The short motif at 28–35 (DTIEVTAK) is the TonB box element. 30 consecutive transmembrane segments (beta stranded) span residues 29–37 (TIEVTAKAG), 65–73 (TAQSVSVVT), 91–99 (YTPGVFTGF), 106–114 (YDTVALRGF), 137–145 (NVLQVDPWF), 152–160 (IKGPSSALY), 180–188 (SEGHFRLTA), 194–202 (QVAAFDYTD), 208–216 (WAFRLTGIT), 259–267 (GGYHSAVPA), 271–279 (IYGQKLSRG), 293–301 (WQQIYSYEF), 309–317 (WSFRQNASY), 353–361 (FAVDNQLEA), 370–378 (HKVLLGVDF), 427–435 (YEQSGVYLQ), 443–451 (WHLNLSGRY), 476–484 (GRASLLYSF), 491–499 (YVSYSQAIT), 517–525 (EQYEVGIIY), 531–539 (TSLYSAALY), 555–563 (YYVPAGKVN), 567–575 (LELEARSQI), 579–587 (LSVIAGYTY), 610–618 (NMASLWAQY), 624–632 (INVGAGIRY), 649–657 (YTLGDASVR), 671–679 (FVQLNVNNI), 684–692 (YVAACYSTS), and 702–710 (VQATVGYDF). Residues 61 to 174 (PLILTAQSVS…PGGVVMMTSK (114 aa)) enclose the TBDR plug domain. In terms of domain architecture, TBDR beta-barrel spans 181–710 (EGHFRLTAGN…SVQATVGYDF (530 aa)). The TonB C-terminal box motif lies at 693-710 (YCYWGAERSVQATVGYDF).

It belongs to the TonB-dependent receptor family.

The protein resides in the cell outer membrane. In terms of biological role, ferrioxamine binding and uptake, in association with the TonB protein. The chain is Ferrioxamine receptor (foxA) from Yersinia enterocolitica.